A 568-amino-acid chain; its full sequence is Envelope glycoprotein E (568 aa).

A signal peptide spans 1–20 (MMPATLAGLALAVTVATMFA). At 21–422 (QRVDSTTIHH…GGGPGNSKRR (402 aa)) the chain is on the virion surface side. 3 N-linked (GlcNAc...) asparagine; by host glycosylation sites follow: asparagine 88, asparagine 179, and asparagine 248. Cysteine 271 and cysteine 280 form a disulfide bridge. The chain crosses the membrane as a helical span at residues 423–443 (AAVLGAAVWIALTLLILGGLG). At 444–568 (AYVAVNKKCL…ANKTFPSQRY (125 aa)) the chain is on the intravirion side. The Internalization motif signature appears at 465-468 (KPTL). Residues 470–534 (THAHTYTSLP…SRRNSFGPTL (65 aa)) are disordered. The interval 482–497 (GDLSLEQDAEDEDEDE) is acidic. A compositionally biased stretch (acidic residues) spans 486-500 (LEQDAEDEDEDEEEL). A compositionally biased stretch (basic residues) spans 515–526 (KSSRSPSRRSSR).

This sequence belongs to the alphaherpesvirinae glycoprotein E family. As to quaternary structure, interacts with gI. In terms of processing, phosphorylated on serines within the acidic cluster. Phosphorylation determines whether endocytosed viral gE traffics to the trans-Golgi network or recycles to the cell membrane.

Its subcellular location is the virion membrane. It localises to the host cell membrane. The protein localises to the host cell junction. The protein resides in the host Golgi apparatus membrane. It is found in the host endosome membrane. In terms of biological role, in epithelial cells, the heterodimer gE/gI is required for the cell-to-cell spread of the virus, by sorting nascent virions to cell junctions. Once the virus reaches the cell junctions, virus particles can spread to adjacent cells extremely rapidly through interactions with cellular receptors that accumulate at these junctions. Implicated in basolateral spread in polarized cells. In neuronal cells, gE/gI is essential for the anterograde spread of the infection throughout the host nervous system. Together with US9, the heterodimer gE/gI is involved in the sorting and transport of viral structural components toward axon tips. This chain is Envelope glycoprotein E (US8), found in Psittacid herpesvirus 1 (isolate Amazon parrot/-/97-0001/1997) (PsHV-1).